A 176-amino-acid polypeptide reads, in one-letter code: Nucleoside triphosphate/diphosphate phosphatase (176 aa).

Catalysis depends on Arg23, which acts as the Proton donor. Residues Asn87, Asp103, Asp105, Asp107, Asp120, and Glu123 each coordinate Mg(2+).

The protein belongs to the Ntdp family. Mg(2+) serves as cofactor.

The catalysed reaction is a ribonucleoside 5'-triphosphate + H2O = a ribonucleoside 5'-diphosphate + phosphate + H(+). The enzyme catalyses a ribonucleoside 5'-diphosphate + H2O = a ribonucleoside 5'-phosphate + phosphate + H(+). Its function is as follows. Has nucleoside phosphatase activity towards nucleoside triphosphates and nucleoside diphosphates. The chain is Nucleoside triphosphate/diphosphate phosphatase from Bacillus cytotoxicus (strain DSM 22905 / CIP 110041 / 391-98 / NVH 391-98).